The primary structure comprises 511 residues: Exodeoxyribonuclease 7 large subunit (511 aa).

The protein belongs to the XseA family. Heterooligomer composed of large and small subunits.

It localises to the cytoplasm. The enzyme catalyses Exonucleolytic cleavage in either 5'- to 3'- or 3'- to 5'-direction to yield nucleoside 5'-phosphates.. In terms of biological role, bidirectionally degrades single-stranded DNA into large acid-insoluble oligonucleotides, which are then degraded further into small acid-soluble oligonucleotides. The chain is Exodeoxyribonuclease 7 large subunit from Brucella melitensis biotype 1 (strain ATCC 23456 / CCUG 17765 / NCTC 10094 / 16M).